The chain runs to 618 residues: Probable Xaa-Pro aminopeptidase P (618 aa).

Residues Asp414, Asp425, Glu523, and Glu537 each contribute to the Mn(2+) site.

It belongs to the peptidase M24B family. Mn(2+) serves as cofactor.

It catalyses the reaction Release of any N-terminal amino acid, including proline, that is linked to proline, even from a dipeptide or tripeptide.. Functionally, catalyzes the removal of a penultimate prolyl residue from the N-termini of peptides. This chain is Probable Xaa-Pro aminopeptidase P (AMPP), found in Metarhizium acridum (strain CQMa 102).